The following is a 62-amino-acid chain: MNVSYLSKRFAEMKKYETDCMNKLMDFAKFLYIQGHLSITEFRNSMKVLEANGAESPAYEMN.

This is an uncharacterized protein from Bacillus subtilis (strain 168).